The primary structure comprises 113 residues: Large ribosomal subunit protein uL22 (113 aa).

This sequence belongs to the universal ribosomal protein uL22 family. As to quaternary structure, part of the 50S ribosomal subunit.

In terms of biological role, this protein binds specifically to 23S rRNA; its binding is stimulated by other ribosomal proteins, e.g. L4, L17, and L20. It is important during the early stages of 50S assembly. It makes multiple contacts with different domains of the 23S rRNA in the assembled 50S subunit and ribosome. Functionally, the globular domain of the protein is located near the polypeptide exit tunnel on the outside of the subunit, while an extended beta-hairpin is found that lines the wall of the exit tunnel in the center of the 70S ribosome. The polypeptide is Large ribosomal subunit protein uL22 (Symbiobacterium thermophilum (strain DSM 24528 / JCM 14929 / IAM 14863 / T)).